The sequence spans 290 residues: ATP synthase subunit a (290 aa).

A run of 7 helical transmembrane segments spans residues 54 to 74, 115 to 135, 136 to 156, 164 to 184, 201 to 221, 233 to 253, and 254 to 274; these read AVHL…ILLF, IAPL…LKWI, PVDY…KIVP, FGLS…VKGF, LVPF…LSLA, VVFI…NVPW, and AIFH…LTVV.

It belongs to the ATPase A chain family. F-type ATPases have 2 components, CF(1) - the catalytic core - and CF(0) - the membrane proton channel. CF(1) has five subunits: alpha(3), beta(3), gamma(1), delta(1), epsilon(1). CF(0) has three main subunits: a(1), b(2) and c(9-12). The alpha and beta chains form an alternating ring which encloses part of the gamma chain. CF(1) is attached to CF(0) by a central stalk formed by the gamma and epsilon chains, while a peripheral stalk is formed by the delta and b chains.

The protein resides in the cell inner membrane. Its function is as follows. Key component of the proton channel; it plays a direct role in the translocation of protons across the membrane. In Stutzerimonas stutzeri (strain A1501) (Pseudomonas stutzeri), this protein is ATP synthase subunit a.